Reading from the N-terminus, the 568-residue chain is Peptidoglycan D,D-transpeptidase FtsI (568 aa).

A helical transmembrane segment spans residues 19-39; the sequence is FVTLCSIVFLFLVILTLRIIF. The active-site Acyl-ester intermediate is S302.

Belongs to the transpeptidase family. FtsI subfamily.

It is found in the cell inner membrane. It catalyses the reaction Preferential cleavage: (Ac)2-L-Lys-D-Ala-|-D-Ala. Also transpeptidation of peptidyl-alanyl moieties that are N-acyl substituents of D-alanine.. The protein operates within cell wall biogenesis; peptidoglycan biosynthesis. Its function is as follows. Catalyzes cross-linking of the peptidoglycan cell wall at the division septum. The protein is Peptidoglycan D,D-transpeptidase FtsI of Buchnera aphidicola subsp. Schizaphis graminum (strain Sg).